The chain runs to 539 residues: MWRVPGLLCVRVARKSKFSGSWNRPAAFMSTLLINQPQYAWLKELGLREENDGVYNGSWGGRGEVITTYCPANNEPIARVRQASMADYEETVEKAREAWSIWADVPAPKRGEVVRQIGDALREKIQVLGSLVSLEMGKILVEGVGEVQEYVDVCDYAVGLSRMIGGPILPSERPGHALIEQWNPVGLVGIITAFNFPVAVYGWNNAIAMICGNACLWKGAPTTSLISVAVTKIIAKVLEDNKLPGAICSLTCGGADIGTAMAKDERVDLLSFTGSTQVGKQVALMVQERFGRSLLELGGNNAIIAFEDADLSLVVPSALFAAVGTAGQRCTTARRLFLHESIHDEVVNRLKKAYAQIRVGNPWDSNVLYGPLHTKQAVSMFLGAVEEAKKEGGTVVYGGKVMDRPGNYVEPTIVTGLDHDASIVHTETFAPILYVFKFKNEDEVFAWNNEVKQGLSSSIFTKDMGRIFRWLGPKGSDCGIVNVNIPTSGAEIGGAFGGEKHTGGGRESGSDAWKQYMRRSTCTINYSKDLPLAQGIKFQ.

The N-terminal 26 residues, 1–26 (MWRVPGLLCVRVARKSKFSGSWNRPA), are a transit peptide targeting the mitochondrion. Lys94 is subject to N6-acetyllysine; alternate. N6-succinyllysine; alternate is present on Lys94. Residues 192–194 (TAF), Lys218, 258–259 (GT), 274–275 (GS), 274–279 (GSTQVG), and 296–297 (EL) each bind NAD(+). Glu296 acts as the Proton acceptor in catalysis. The Nucleophile role is filled by Cys330. Thr331 contributes to the (S)-2-amino-6-oxohexanoate binding site. Glu427 contacts NAD(+). An N6-acetyllysine modification is found at Lys462. (S)-2-amino-6-oxohexanoate-binding residues include Gly489 and Ala490. N6-acetyllysine is present on Lys500. Lys537 bears the N6-succinyllysine mark.

Belongs to the aldehyde dehydrogenase family. In terms of assembly, homotetramer.

The protein resides in the cytoplasm. The protein localises to the cytosol. Its subcellular location is the nucleus. It is found in the mitochondrion. It catalyses the reaction nonanal + NAD(+) + H2O = nonanoate + NADH + 2 H(+). It carries out the reaction (S)-2-amino-6-oxohexanoate + NAD(+) + H2O = L-2-aminoadipate + NADH + 2 H(+). The enzyme catalyses betaine aldehyde + NAD(+) + H2O = glycine betaine + NADH + 2 H(+). The catalysed reaction is an aldehyde + NAD(+) + H2O = a carboxylate + NADH + 2 H(+). It catalyses the reaction hexanal + NAD(+) + H2O = hexanoate + NADH + 2 H(+). It carries out the reaction octanal + NAD(+) + H2O = octanoate + NADH + 2 H(+). The enzyme catalyses (E)-non-2-enal + NAD(+) + H2O = (E)-non-2-enoate + NADH + 2 H(+). The catalysed reaction is (E)-4-hydroxynon-2-enal + NAD(+) + H2O = (E)-4-hydroxynon-2-enoate + NADH + 2 H(+). It functions in the pathway amine and polyamine biosynthesis; betaine biosynthesis via choline pathway; betaine from betaine aldehyde: step 1/1. Multifunctional enzyme mediating important protective effects. Metabolizes betaine aldehyde to betaine, an important cellular osmolyte and methyl donor. Protects cells from oxidative stress by metabolizing a number of lipid peroxidation-derived aldehydes. Involved in lysine catabolism. The sequence is that of Alpha-aminoadipic semialdehyde dehydrogenase (ALDH7A1) from Bos taurus (Bovine).